We begin with the raw amino-acid sequence, 927 residues long: Disks large homolog 1 (927 aa).

The L27 domain maps to 4–64 (RKQDTQRALT…FYEVTLLDNP (61 aa)). PDZ domains follow at residues 223–310 (EITL…RRRK), 318–405 (DIKL…AKPT), and 466–547 (KVVL…QYRP). The SH3 domain maps to 581–651 (KRSLYVRALF…PSKRRVEKKE (71 aa)). Residues 692–719 (DQSEMETSDVDQHVTSNASDSESSYRGQ) form a disordered region. Residues 704–717 (HVTSNASDSESSYR) are compositionally biased toward polar residues. Residues 737–912 (SRPVIILGPT…IYNQIKQIIE (176 aa)) enclose the Guanylate kinase-like domain.

Belongs to the MAGUK family.

It localises to the cell membrane. The protein resides in the endoplasmic reticulum membrane. The protein localises to the cell junction. Its subcellular location is the cytoplasm. It is found in the apical cell membrane. Functionally, essential multidomain scaffolding protein required for normal development. Recruits channels, receptors and signaling molecules to discrete plasma membrane domains in polarized cells. Promotes epithelial cell layer barrier function via maintaining cell-cell adhesion. May play a role in adherens junction assembly, signal transduction and cell proliferation. In Xenopus tropicalis (Western clawed frog), this protein is Disks large homolog 1 (dlg1).